The following is a 239-amino-acid chain: MVIKAQSPAGFAEEYIIESIWNNRFPPGTILPAERELSELIGVTRTTLREVLQRLARDGWLTIQHGKPTKVNNFWETSGLNILETLARLDHESVPQLIDNLLSVRTNISTIFIRTAFRQHPDKAQEVLAAANEVADHADAFAELDYSIFRGLAFASGNPIYGLIINGMKGLYTRTGRHYFANPEARSLALGFYHKLSELCRQGAHDQVYETVRRYGHESGEIWHRMQKNLPGDLSIQGQ.

An HTH gntR-type domain is found at 6-74 (QSPAGFAEEY…HGKPTKVNNF (69 aa)). Residues 34–53 (ERELSELIGVTRTTLREVLQ) constitute a DNA-binding region (H-T-H motif).

In terms of assembly, homodimer.

It is found in the cytoplasm. Functionally, multifunctional regulator of fatty acid metabolism. This is Fatty acid metabolism regulator protein from Escherichia fergusonii (strain ATCC 35469 / DSM 13698 / CCUG 18766 / IAM 14443 / JCM 21226 / LMG 7866 / NBRC 102419 / NCTC 12128 / CDC 0568-73).